Consider the following 146-residue polypeptide: Snaclec anticoagulant protein subunit B (146 aa).

Residues 1–23 (MGRFIFVSFGLLVLFLSLSGTAA) form the signal peptide. The C-type lectin domain occupies 24 to 146 (DCPSDWSSYE…IANFVCEFQA (123 aa)). 3 disulfide bridges follow: cysteine 25-cysteine 36, cysteine 53-cysteine 142, and cysteine 119-cysteine 134. 3 residues coordinate Ca(2+): serine 64, glutamine 66, and glutamate 70. Glutamate 143 serves as a coordination point for Ca(2+).

This sequence belongs to the snaclec family. As to quaternary structure, heterodimer with subunit A of agkisacutacin or AaACP; disulfide-linked. As to expression, expressed by the venom gland.

It is found in the secreted. In terms of biological role, anticoagulant protein which binds to the gamma-carboxyglutamic acid-domain regions of factors IX and factor X in the presence of calcium with a 1 to 1 stoichiometry. Also inhibits platelet aggregation by binding to platelet glycoprotein Ibalpha (GP1BA) and functioning as a blocker of vWF. Is devoid of hemorrhagic and lethal activities. Possesses antithrombotic and thrombolytic activities. Also hydrolyzes the Aalpha-chain of fibrinogen. Does not affect the Bbeta-chain and the gamma chain. The chain is Snaclec anticoagulant protein subunit B from Deinagkistrodon acutus (Hundred-pace snake).